A 185-amino-acid chain; its full sequence is Lactoylglutathione lyase (185 aa).

Residues Met1–Ala22 form a disordered region. The 148-residue stretch at Ile27–Leu174 folds into the VOC domain. The substrate site is built by Gln30 and Arg34. Residue Gln30 coordinates Zn(2+). Glu96 is a binding site for Zn(2+). Substrate-binding positions include Asn100, Arg120, His124, and Lys154–Met155. Residue His124 coordinates Zn(2+). Glu170 contributes to the Zn(2+) binding site. Glu170 (proton donor/acceptor) is an active-site residue.

The protein belongs to the glyoxalase I family. It depends on Zn(2+) as a cofactor.

It catalyses the reaction (R)-S-lactoylglutathione = methylglyoxal + glutathione. It functions in the pathway secondary metabolite metabolism; methylglyoxal degradation; (R)-lactate from methylglyoxal: step 1/2. Its function is as follows. Catalyzes the conversion of hemimercaptal, formed from methylglyoxal and glutathione, to S-lactoylglutathione. In Arabidopsis thaliana (Mouse-ear cress), this protein is Lactoylglutathione lyase.